The following is a 187-amino-acid chain: UPF0301 protein GOX1459 (187 aa).

The protein belongs to the UPF0301 (AlgH) family.

The chain is UPF0301 protein GOX1459 from Gluconobacter oxydans (strain 621H) (Gluconobacter suboxydans).